Consider the following 733-residue polypeptide: Two pore calcium channel protein 1 (733 aa).

Met-1 carries the post-translational modification N-acetylmethionine. Over 1 to 71 (MEDPLIGRDS…RYYFIFTRLD (71 aa)) the chain is Cytoplasmic. The helical transmembrane segment at 72–92 (LIWSLNYFALLFLNFFEQPLW) threads the bilayer. The Vacuolar portion of the chain corresponds to 93-120 (CEKNPKPSCKDRDYYYLGELPYLTNAES). The helical transmembrane segment at 121-141 (IIYEVITLAILLVHTFFPISY) threads the bilayer. The Cytoplasmic portion of the chain corresponds to 142–158 (EGSRIFWTSRLNLVKVA). Residues 159–179 (CVVILFVDVLVDFLYLSPLAF) traverse the membrane as a helical segment. Position 180 (Asp-180) is a topological domain, vacuolar. A helical; Voltage-sensor transmembrane segment spans residues 181–199 (FLPFRIAPYVRVIIFILSI). Over 200–218 (RELRDTLVLLSGMLGTYLN) the chain is Cytoplasmic. The helical transmembrane segment at 219 to 239 (ILALWMLFLLFASWIAFVMFE) threads the bilayer. Residues 240-245 (DTQQGL) lie on the Vacuolar side of the membrane. The pore-forming intramembrane region spans 246–260 (TVFTSYGATLYQMFI). Residues 261 to 282 (LFTTSNNPDVWIPAYKSSRWSS) are Vacuolar-facing. A helical membrane pass occupies residues 283-303 (VFFVLYVLIGVYFVTNLILAV). At 304-428 (VYDSFKEQLA…LSQQLRAFVR (125 aa)) the chain is on the cytoplasmic side. 2 consecutive EF-hand domains span residues 322–357 (MKRR…LTNY) and 363–398 (ISKE…IALR). A helical membrane pass occupies residues 429-449 (SPNFGYAISFILIINFIAVVV). The Vacuolar portion of the chain corresponds to 450 to 465 (ETTLDIEESSAQKPWQ). The helical transmembrane segment at 466–486 (VAEFVFGWIYVLEMALKIYTY) threads the bilayer. Residues 487–498 (GFENYWREGANR) are Cytoplasmic-facing. A helical transmembrane segment spans residues 499 to 519 (FDFLVTWVIVIGETATFITPD). Residues 520-528 (ENTFFSNGE) lie on the Vacuolar side of the membrane. A helical; Voltage-sensor transmembrane segment spans residues 529 to 546 (WIRYLLLARMLRLIRLLM). Residues 547 to 557 (NVQRYRAFIAT) lie on the Cytoplasmic side of the membrane. The helical transmembrane segment at 558–578 (FITLIPSLMPYLGTIFCVLCI) threads the bilayer. The Vacuolar segment spans residues 579–615 (YCSIGVQVFGGLVNAGNKKLFETELAEDDYLLFNFND). An intramembrane region (pore-forming) is located at residues 616 to 630 (YPNGMVTLFNLLVMG). Residues 631–651 (NWQVWMESYKDLTGTWWSITY) lie on the Vacuolar side of the membrane. A helical transmembrane segment spans residues 652-672 (FVSFYVITILLLLNLVVAFVL). At 673 to 733 (EAFFTELDLE…SKPECSTSDT (61 aa)) the chain is on the cytoplasmic side. Positions 686–695 (KCQGQDSQEK) are enriched in basic and acidic residues. Residues 686–711 (KCQGQDSQEKRNRRRSAGSKSRSQRV) form a disordered region.

This sequence belongs to the calcium channel alpha-1 subunit (TC 1.A.1.11) family. Two pore calcium channel subfamily. As to quaternary structure, homodimer. Ubiquitously expressed.

It localises to the vacuole membrane. Its activity is regulated as follows. Inhibited by Al(3+). In terms of biological role, functions as a voltage-gated inward-rectifying Ca(2+) channel (VDCC) across the vacuole membrane. Is one of the essential components of the slow vacuolar (SV) channel. Acts as the major ROS-responsive Ca(2+) channel and is the possible target of Al-dependent inhibition. Involved in the regulation of germination and stomatal movement. The polypeptide is Two pore calcium channel protein 1 (TPC1) (Arabidopsis thaliana (Mouse-ear cress)).